The sequence spans 101 residues: Small ribosomal subunit protein uS14 (101 aa).

This sequence belongs to the universal ribosomal protein uS14 family. As to quaternary structure, part of the 30S ribosomal subunit. Contacts proteins S3 and S10.

Functionally, binds 16S rRNA, required for the assembly of 30S particles and may also be responsible for determining the conformation of the 16S rRNA at the A site. The chain is Small ribosomal subunit protein uS14 from Paenarthrobacter aurescens (strain TC1).